Here is a 112-residue protein sequence, read N- to C-terminus: Toxin-like structure LSTX-D10 (112 aa).

The first 20 residues, 1–20, serve as a signal peptide directing secretion; the sequence is MMKVLVVVALLVTLISYSSS. The propeptide occupies 21 to 41; the sequence is EGIDDLEADELLSLMANEQTR. Cystine bridges form between cysteine 45-cysteine 60, cysteine 52-cysteine 69, cysteine 59-cysteine 84, and cysteine 71-cysteine 82.

Belongs to the neurotoxin 19 (CSTX) family. 01 subfamily. Expressed by the venom gland.

Its subcellular location is the secreted. This chain is Toxin-like structure LSTX-D10, found in Lycosa singoriensis (Wolf spider).